The primary structure comprises 508 residues: Probable polyol transporter 3 (508 aa).

12 consecutive transmembrane segments (helical) span residues 21-41 (FAFG…YDTG), 60-80 (QIEV…LTAG), 90-110 (YTIA…GYGP), 120-140 (CIAG…SAEI), 147-167 (GFLT…GYVS), 178-198 (LGWR…AFGI), 280-300 (ILIA…EAVV), 318-338 (LLLA…IATF), 348-368 (LLLT…VSLT), 384-404 (IVST…ITWV), 418-438 (GASI…MSFL), and 448-468 (GVFF…FFML).

It belongs to the major facilitator superfamily. Sugar transporter (TC 2.A.1.1) family.

The protein resides in the membrane. Functionally, plasma membrane sugar-proton symporter. The polypeptide is Probable polyol transporter 3 (PLT3) (Arabidopsis thaliana (Mouse-ear cress)).